We begin with the raw amino-acid sequence, 127 residues long: MORF4 family-associated protein 1 (127 aa).

Residues 92–126 (RAAKRCEKAEEKAKEIAKMAEMLVELVRRIEKSES) are a coiled coil.

The protein belongs to the MORF4 family-associated protein family. As to quaternary structure, found in a complex composed of MORF4L1, MRFAP1 and RB1. Interacts via its N-terminus with MORF4L1. Interacts with CSTB and MORF4L2.

Its subcellular location is the nucleus. It is found in the cytoplasm. The protein localises to the perinuclear region. The chain is MORF4 family-associated protein 1 from Homo sapiens (Human).